We begin with the raw amino-acid sequence, 790 residues long: DNA topoisomerase 1 (790 aa).

3 stretches are compositionally biased toward polar residues: residues 1–18, 44–54, and 61–70; these read MKSN…SNVM, KLSSGALNGNS, and SNLSCPSPYT. Residues 1–196 form a disordered region; sequence MKSNPGITVI…KKRPDVSASV (196 aa). The segment covering 158 to 167 has biased composition (acidic residues); sequence QEEAAADDDP. Residues 168–181 show a composition bias toward polar residues; the sequence is SISNRNKKSTTPAS. 3 interaction with DNA regions span residues 426–427, 490–495, and 581–583; these read KY, RAGNEK, and TAK. The region spanning 433–790 is the Topo IB-type catalytic domain; it reads SSSLKGKVTR…AMDVVLIFRF (358 aa). Tyr-749 functions as the O-(3'-phospho-DNA)-tyrosine intermediate in the catalytic mechanism.

Belongs to the type IB topoisomerase family.

Its subcellular location is the nucleus. The enzyme catalyses ATP-independent breakage of single-stranded DNA, followed by passage and rejoining.. Functionally, releases the supercoiling and torsional tension of DNA introduced during the DNA replication and transcription by transiently cleaving and rejoining one strand of the DNA duplex. Introduces a single-strand break via transesterification at a target site in duplex DNA. The scissile phosphodiester is attacked by the catalytic tyrosine of the enzyme, resulting in the formation of a DNA-(3'-phosphotyrosyl)-enzyme intermediate and the expulsion of a 5'-OH DNA strand. The free DNA strand then rotates around the intact phosphodiester bond on the opposing strand, thus removing DNA supercoils. Finally, in the religation step, the DNA 5'-OH attacks the covalent intermediate to expel the active-site tyrosine and restore the DNA phosphodiester backbone. This chain is DNA topoisomerase 1 (TOP1), found in Daucus carota (Wild carrot).